Reading from the N-terminus, the 132-residue chain is Sec-independent protein translocase protein TatB (132 aa).

Residues 2–22 (FDGIGFMELLLIGILGLVVLG) form a helical membrane-spanning segment. Polar residues-rich tracts occupy residues 86 to 95 (LKQAAQSVNR) and 116 to 132 (IAETPTQSGDTHSKNNG). Residues 86-132 (LKQAAQSVNRPYQLDESNEQEPKIAPPQANIAETPTQSGDTHSKNNG) form a disordered region.

The protein belongs to the TatB family. The Tat system comprises two distinct complexes: a TatABC complex, containing multiple copies of TatA, TatB and TatC subunits, and a separate TatA complex, containing only TatA subunits. Substrates initially bind to the TatABC complex, which probably triggers association of the separate TatA complex to form the active translocon.

It localises to the cell inner membrane. In terms of biological role, part of the twin-arginine translocation (Tat) system that transports large folded proteins containing a characteristic twin-arginine motif in their signal peptide across membranes. Together with TatC, TatB is part of a receptor directly interacting with Tat signal peptides. TatB may form an oligomeric binding site that transiently accommodates folded Tat precursor proteins before their translocation. The polypeptide is Sec-independent protein translocase protein TatB (Shewanella denitrificans (strain OS217 / ATCC BAA-1090 / DSM 15013)).